Here is a 107-residue protein sequence, read N- to C-terminus: Latency-related protein 2 (107 aa).

A compositionally biased stretch (pro residues) spans 1–44; that stretch reads MAPPLPRTPTPTHPHSHAPPLPRTPTPAHPHSHAPPLPRTPTPT. A disordered region spans residues 1 to 63; sequence MAPPLPRTPT…SIQHRQGKDT (63 aa). 3 tandem repeats follow at residues 2–17, 18–33, and 34–49. Residues 2 to 49 are 3 X 17 AA tandem repeats; sequence APPLPRTPTPTHPHSHAPPLPRTPTPAHPHSHAPPLPRTPTPTHPHSH. Positions 46–58 are enriched in basic residues; that stretch reads PHSHAPPRSIQHR.

This Homo sapiens (Human) protein is Latency-related protein 2.